Consider the following 512-residue polypeptide: rRNA N(6)-adenosine-methyltransferase ZCCHC4 (512 aa).

Zn(2+) contacts are provided by Cys-39, His-41, Cys-63, Cys-72, Cys-124, Cys-127, His-139, and His-142. The GRF-type zinc-finger motif lies at 39 to 81; it reads CPHGPTLLFVKVNQGKEETRKFYACSACRDRKDCNFFQWEDEK. S-adenosyl-L-methionine contacts are provided by residues 171–174, Arg-201, Asp-223, 241–242, and Asp-274; these read QYLF and NM. The tract at residues 335–355 is regulatory loop; sequence QVDYDNHALYKHGKTGRKQSP. Zn(2+)-binding residues include Cys-378, Cys-381, His-391, Cys-392, Cys-395, Cys-398, His-408, Cys-409, Cys-412, Cys-415, His-422, Cys-423, Cys-426, Cys-429, His-434, and Cys-436. One can recognise a DHHC domain in the interval 393 to 445; that stretch reads VHCNSCTSKDGRKWSHCFLCKKCVKPSWIHCNTCNRCALPDHSCLGPKDGCFI. The CCHC-type zinc-finger motif lies at 441–458; it reads DGCFICGALDHKRSNCPN.

Belongs to the ZCCHC4 family. As to quaternary structure, interacts with components of the ASC-1 complex TRIP4, ASCC1, ASCC2 and ASCC3. Interact with AHCYL1 and AHCYL2. Interact with YTHDC2.

The protein resides in the cytoplasm. It is found in the nucleus. It localises to the nucleolus. It catalyses the reaction adenosine(4220) in 28S rRNA + S-adenosyl-L-methionine = N(6)-methyladenosine(4220) in 28S rRNA + S-adenosyl-L-homocysteine + H(+). Its function is as follows. rRNA N6-methyltransferase that specifically methylates the adenine in position 4220 of 28S rRNA. N6-methylation of adenine(4220) in 28S rRNA is required for translation. The chain is rRNA N(6)-adenosine-methyltransferase ZCCHC4 from Mus musculus (Mouse).